Consider the following 319-residue polypeptide: Lipase 1 (319 aa).

Residue Ser-189 is the Nucleophile of the active site. Ca(2+) is bound by residues Asp-314 and Asp-317.

The enzyme catalyses a triacylglycerol + H2O = a diacylglycerol + a fatty acid + H(+). In Moraxella sp. (strain TA144), this protein is Lipase 1 (lip1).